The primary structure comprises 178 residues: Large ribosomal subunit protein uL6 (178 aa).

The protein belongs to the universal ribosomal protein uL6 family. Part of the 50S ribosomal subunit.

This protein binds to the 23S rRNA, and is important in its secondary structure. It is located near the subunit interface in the base of the L7/L12 stalk, and near the tRNA binding site of the peptidyltransferase center. The polypeptide is Large ribosomal subunit protein uL6 (Buchnera aphidicola subsp. Acyrthosiphon pisum (strain APS) (Acyrthosiphon pisum symbiotic bacterium)).